Here is a 96-residue protein sequence, read N- to C-terminus: Co-chaperonin GroES (96 aa).

Belongs to the GroES chaperonin family. Heptamer of 7 subunits arranged in a ring. Interacts with the chaperonin GroEL.

The protein localises to the cytoplasm. Its function is as follows. Together with the chaperonin GroEL, plays an essential role in assisting protein folding. The GroEL-GroES system forms a nano-cage that allows encapsulation of the non-native substrate proteins and provides a physical environment optimized to promote and accelerate protein folding. GroES binds to the apical surface of the GroEL ring, thereby capping the opening of the GroEL channel. This Caulobacter vibrioides (strain ATCC 19089 / CIP 103742 / CB 15) (Caulobacter crescentus) protein is Co-chaperonin GroES.